The following is a 395-amino-acid chain: uncharacterized protein (395 aa).

7 consecutive transmembrane segments (helical) span residues leucine 42 to isoleucine 62, leucine 67 to leucine 87, leucine 97 to phenylalanine 117, isoleucine 128 to proline 148, phenylalanine 196 to leucine 216, isoleucine 241 to alanine 261, and leucine 281 to valine 301.

Its subcellular location is the cell membrane. This is an uncharacterized protein from Mycoplasma genitalium (strain ATCC 33530 / DSM 19775 / NCTC 10195 / G37) (Mycoplasmoides genitalium).